The following is a 253-amino-acid chain: Large ribosomal subunit protein uL4 (253 aa).

The segment at 61-107 (GWGSGRGTSHVPRLVNSSRAARVPHARGGRRAHPPKPEADRSEKVNT) is disordered. Residues 82–94 (RVPHARGGRRAHP) show a composition bias toward basic residues. Residues 95 to 107 (PKPEADRSEKVNT) show a composition bias toward basic and acidic residues.

The protein belongs to the universal ribosomal protein uL4 family. As to quaternary structure, part of the 50S ribosomal subunit.

In terms of biological role, one of the primary rRNA binding proteins, this protein initially binds near the 5'-end of the 23S rRNA. It is important during the early stages of 50S assembly. It makes multiple contacts with different domains of the 23S rRNA in the assembled 50S subunit and ribosome. Its function is as follows. Forms part of the polypeptide exit tunnel. This is Large ribosomal subunit protein uL4 from Methanosarcina barkeri (strain Fusaro / DSM 804).